Here is a 900-residue protein sequence, read N- to C-terminus: uncharacterized protein (900 aa).

Over residues 1-16 (MGSNKEAKNIDSKNDR) the composition is skewed to basic and acidic residues. 5 disordered regions span residues 1–84 (MGSN…KLSS), 103–160 (NSSR…PDPS), 512–556 (NFNQ…KKSG), 568–613 (LAST…KSAN), and 648–676 (KRSSNAQLQPEDEPPLSSPISSNSDNSFP). Residues 17–27 (GLTSITSNKIS) show a composition bias toward polar residues. Residues 30–58 (KAHDNHTSSMITEHKNADKEKGKQEKESR) are compositionally biased toward basic and acidic residues. Composition is skewed to low complexity over residues 63–76 (QSSSSVESHSPQVS) and 103–127 (NSSRRSSDSAASSSVSKLKSAQLSK). A Phosphoserine modification is found at serine 105. A compositionally biased stretch (basic residues) spans 129-143 (GLHHHHTSNNKHSHR). Over residues 528–537 (SSRSLSLPSS) the composition is skewed to low complexity. Basic residues predominate over residues 543 to 553 (KRKKSPTKATK). Low complexity-rich tracts occupy residues 570–601 (STSHTTSPSVSPSISSSSSPKIQPQSHISSPP) and 665–676 (SPISSNSDNSFP).

This is an uncharacterized protein from Saccharomyces cerevisiae (strain ATCC 204508 / S288c) (Baker's yeast).